Reading from the N-terminus, the 115-residue chain is Peptidyl-tRNA hydrolase (115 aa).

Belongs to the PTH2 family.

It is found in the cytoplasm. The catalysed reaction is an N-acyl-L-alpha-aminoacyl-tRNA + H2O = an N-acyl-L-amino acid + a tRNA + H(+). Functionally, the natural substrate for this enzyme may be peptidyl-tRNAs which drop off the ribosome during protein synthesis. This is Peptidyl-tRNA hydrolase from Methanococcoides burtonii (strain DSM 6242 / NBRC 107633 / OCM 468 / ACE-M).